We begin with the raw amino-acid sequence, 191 residues long: ATP-dependent Clp protease proteolytic subunit 1 (191 aa).

Catalysis depends on serine 91, which acts as the Nucleophile. The active site involves histidine 116.

The protein belongs to the peptidase S14 family. In terms of assembly, fourteen ClpP subunits assemble into 2 heptameric rings which stack back to back to give a disk-like structure with a central cavity, resembling the structure of eukaryotic proteasomes.

The protein localises to the cytoplasm. The enzyme catalyses Hydrolysis of proteins to small peptides in the presence of ATP and magnesium. alpha-casein is the usual test substrate. In the absence of ATP, only oligopeptides shorter than five residues are hydrolyzed (such as succinyl-Leu-Tyr-|-NHMec, and Leu-Tyr-Leu-|-Tyr-Trp, in which cleavage of the -Tyr-|-Leu- and -Tyr-|-Trp bonds also occurs).. Cleaves peptides in various proteins in a process that requires ATP hydrolysis. Has a chymotrypsin-like activity. Plays a major role in the degradation of misfolded proteins. This is ATP-dependent Clp protease proteolytic subunit 1 from Chlamydia caviae (strain ATCC VR-813 / DSM 19441 / 03DC25 / GPIC) (Chlamydophila caviae).